Here is a 292-residue protein sequence, read N- to C-terminus: Acetyl-coenzyme A carboxylase carboxyl transferase subunit beta (292 aa).

Residues 29–292 (LWVKCSECGQ…HGVKELVQTN (264 aa)) form the CoA carboxyltransferase N-terminal domain. Zn(2+) contacts are provided by C33, C36, C52, and C55. The segment at 33–55 (CSECGQVAYRKDLISNFNVCSNC) adopts a C4-type zinc-finger fold.

It belongs to the AccD/PCCB family. In terms of assembly, acetyl-CoA carboxylase is a heterohexamer composed of biotin carboxyl carrier protein (AccB), biotin carboxylase (AccC) and two subunits each of ACCase subunit alpha (AccA) and ACCase subunit beta (AccD). The cofactor is Zn(2+).

It is found in the cytoplasm. It catalyses the reaction N(6)-carboxybiotinyl-L-lysyl-[protein] + acetyl-CoA = N(6)-biotinyl-L-lysyl-[protein] + malonyl-CoA. It participates in lipid metabolism; malonyl-CoA biosynthesis; malonyl-CoA from acetyl-CoA: step 1/1. Its function is as follows. Component of the acetyl coenzyme A carboxylase (ACC) complex. Biotin carboxylase (BC) catalyzes the carboxylation of biotin on its carrier protein (BCCP) and then the CO(2) group is transferred by the transcarboxylase to acetyl-CoA to form malonyl-CoA. This Prochlorococcus marinus subsp. pastoris (strain CCMP1986 / NIES-2087 / MED4) protein is Acetyl-coenzyme A carboxylase carboxyl transferase subunit beta.